We begin with the raw amino-acid sequence, 336 residues long: GTPase Obg (336 aa).

Positions 1-159 (MKFVDSATVF…LELAMELKLM (159 aa)) constitute an Obg domain. The disordered stretch occupies residues 120-143 (GGHGGRGNQHFATSTNQAPRRSEP). A compositionally biased stretch (polar residues) spans 129–138 (HFATSTNQAP). The 164-residue stretch at 160 to 323 (ADVGLVGFPN…LKDELWRQVS (164 aa)) folds into the OBG-type G domain. GTP contacts are provided by residues 166–173 (GFPNAGKS), 191–195 (FTTLV), 213–216 (DIPG), 280–283 (TKMD), and 304–306 (SSV). Residues Ser-173 and Thr-193 each contribute to the Mg(2+) site.

The protein belongs to the TRAFAC class OBG-HflX-like GTPase superfamily. OBG GTPase family. Monomer. It depends on Mg(2+) as a cofactor.

Its subcellular location is the cytoplasm. An essential GTPase which binds GTP, GDP and possibly (p)ppGpp with moderate affinity, with high nucleotide exchange rates and a fairly low GTP hydrolysis rate. Plays a role in control of the cell cycle, stress response, ribosome biogenesis and in those bacteria that undergo differentiation, in morphogenesis control. This chain is GTPase Obg, found in Chlorobium phaeovibrioides (strain DSM 265 / 1930) (Prosthecochloris vibrioformis (strain DSM 265)).